Reading from the N-terminus, the 147-residue chain is Plasminogen receptor (KT) (147 aa).

Residues 1–52 lie on the Extracellular side of the membrane; sequence MGFIFSKSMNENMKNQQEFMVTHARLQLERHLTMQNEMRERQMAMQIAWSRE. The helical transmembrane segment at 53-73 threads the bilayer; sequence FLKYFGTFFGIATISLATGAL. The Cytoplasmic portion of the chain corresponds to 74–78; the sequence is KRKKP. A helical transmembrane segment spans residues 79–99; it reads AFLVPIVPLSFIFTYQYDLGY. The Extracellular portion of the chain corresponds to 100 to 147; the sequence is GTLLQRMKSEAEDILETEKTKLELPKGLITFESLEKARREQSKLFSDK.

In terms of assembly, interacts with PLAT. Interacts with PLAUR. As to expression, expressed in monocytes; detected in differentiated monocytes but not in progenitor cells. Expressed in adrenal medulla and hippocampus.

It localises to the cell membrane. Its function is as follows. Receptor for plasminogen. Regulates urokinase plasminogen activator-dependent and stimulates tissue-type plasminogen activator-dependent cell surface plasminogen activation. Proposed to be part of a local catecholaminergic cell plasminogen activation system that regulates neuroendocrine prohormone processing. Involved in regulation of inflammatory response; regulates monocyte chemotactic migration and matrix metalloproteinase activation, such as of MMP2 and MMP9. This Mus musculus (Mouse) protein is Plasminogen receptor (KT) (Plgrkt).